A 346-amino-acid chain; its full sequence is Glycerol-3-phosphate dehydrogenase [NAD(P)+] (346 aa).

Residues S15, W16, R36, and K110 each contribute to the NADPH site. The sn-glycerol 3-phosphate site is built by K110, G139, and S141. A143 provides a ligand contact to NADPH. Positions 194, 247, 257, 258, and 259 each coordinate sn-glycerol 3-phosphate. K194 acts as the Proton acceptor in catalysis. R258 is an NADPH binding site. Residues V282 and E284 each coordinate NADPH.

This sequence belongs to the NAD-dependent glycerol-3-phosphate dehydrogenase family.

Its subcellular location is the cytoplasm. It catalyses the reaction sn-glycerol 3-phosphate + NAD(+) = dihydroxyacetone phosphate + NADH + H(+). The catalysed reaction is sn-glycerol 3-phosphate + NADP(+) = dihydroxyacetone phosphate + NADPH + H(+). The protein operates within membrane lipid metabolism; glycerophospholipid metabolism. Catalyzes the reduction of the glycolytic intermediate dihydroxyacetone phosphate (DHAP) to sn-glycerol 3-phosphate (G3P), the key precursor for phospholipid synthesis. The chain is Glycerol-3-phosphate dehydrogenase [NAD(P)+] from Xylella fastidiosa (strain Temecula1 / ATCC 700964).